A 186-amino-acid polypeptide reads, in one-letter code: Methylamine dehydrogenase light chain (186 aa).

A signal peptide (tat-type signal) is located at residues 1 to 57 (MLGKSQFDDLFEKMSRKVAGHTSRRGFIGRVGTAVAGVALVPLLPVDRRGRVSRANA). 6 cysteine pairs are disulfide-bonded: Cys78–Cys143, Cys84–Cys116, Cys91–Cys176, Cys93–Cys141, Cys101–Cys132, and Cys133–Cys164. At Trp112 the chain carries Tryptophylquinone. The segment at residues 112–163 (WVASCYNPTDKQSYLISYRDCCGANVSGRCACLNTEGELPVYRPEFGNDIIW) is a cross-link (tryptophan tryptophylquinone (Trp-Trp)).

It belongs to the aromatic amine dehydrogenase light chain family. In terms of assembly, heterotetramer of two light and two heavy chains. Tryptophan tryptophylquinone residue is required as a cofactor. Post-translationally, predicted to be exported by the Tat system. The position of the signal peptide cleavage has been experimentally proven. In terms of processing, tryptophan tryptophylquinone (TTQ) is formed by oxidation of the indole ring of a tryptophan to form tryptophylquinone followed by covalent cross-linking with another tryptophan residue.

The protein resides in the periplasm. It carries out the reaction 2 oxidized [amicyanin] + methylamine + H2O = 2 reduced [amicyanin] + formaldehyde + NH4(+) + 2 H(+). It functions in the pathway one-carbon metabolism; methylamine degradation; formaldehyde from methylamine: step 1/1. Methylamine dehydrogenase carries out the oxidation of methylamine. Electrons are passed from methylamine dehydrogenase to amicyanin. This Methylorubrum extorquens (strain ATCC 14718 / DSM 1338 / JCM 2805 / NCIMB 9133 / AM1) (Methylobacterium extorquens) protein is Methylamine dehydrogenase light chain (mauA).